We begin with the raw amino-acid sequence, 572 residues long: Putative two-component response regulator ARR13 (572 aa).

One can recognise a Response regulatory domain in the interval 17-134 (NVMVVDDNRV…DLPKIYQFAL (118 aa)). A 4-aspartylphosphate modification is found at Asp71. The tract at residues 175 to 225 (KKNCSSKSDTRTVNSTNVSHVSTNGSRKNRKRKPKGGPSDDGESLSQPPKK) is disordered. The span at 179 to 197 (SSKSDTRTVNSTNVSHVST) shows a compositional bias: polar residues. Positions 224-227 (KKKK) match the Nuclear localization signal motif. Residues 227 to 277 (KIWWTNPLQDLFLQAIQHIGYDKVVPKKILAIMNVPYLTRENVASHLQKYR) constitute a DNA-binding region (myb-like GARP). Polar residues predominate over residues 509–522 (NQDQSNGESSNTIA). Residues 509-531 (NQDQSNGESSNTIATPETNTPNF) form a disordered region.

Belongs to the ARR family. Type-B subfamily. In terms of assembly, binds the target DNA as a monomer. Two-component system major event consists of a His-to-Asp phosphorelay between a sensor histidine kinase (HK) and a response regulator (RR). In plants, the His-to-Asp phosphorelay involves an additional intermediate named Histidine-containing phosphotransfer protein (HPt). This multistep phosphorelay consists of a His-Asp-His-Asp sequential transfer of a phosphate group between first a His and an Asp of the HK protein, followed by the transfer to a conserved His of the HPt protein and finally the transfer to an Asp in the receiver domain of the RR protein.

The protein resides in the nucleus. Putative transcriptional activator that binds specifically to the DNA sequence 5'-[AG]GATT-3'. Functions as a response regulator involved in His-to-Asp phosphorelay signal transduction system. Phosphorylation of the Asp residue in the receiver domain activates the ability of the protein to promote the transcription of target genes. Could directly activate some type-A response regulators in response to cytokinins. The chain is Putative two-component response regulator ARR13 (ARR13) from Arabidopsis thaliana (Mouse-ear cress).